We begin with the raw amino-acid sequence, 421 residues long: UPF0229 protein lpl2726 (421 aa).

Residues 83–110 (IAGDRIKRPGGGGSGGAGGNASDSGEGE) form a disordered region. Residues 91-101 (PGGGGSGGAGG) are compositionally biased toward gly residues.

This sequence belongs to the UPF0229 family.

This Legionella pneumophila (strain Lens) protein is UPF0229 protein lpl2726.